The primary structure comprises 490 residues: MDNSRDKIHILGAVSDTFQEVQHPCSILKYKVYFVTTDTFYCKYLTASFTGLKKFPTERQLPLECHFNHIDWDLGNNFKVKEGVFYTFDIIAPLPRCTPRTIVTQEGSISYKLTVKLYTEDDCRMPKSANVPVVVPFTLNPDRIPESQHIRYGAPLNDACFTSLSMKSSKYSFLTAFFKYPQQCYKGPGCVCPLLIDLESEDADVLSSTPGSAGTDDPHIDPIAINSQDSQFIFQDRLPRLSNDCDMKGRSSLSRTSSPVVEKKLKRYYIRVLLVQSITFFLFNDAFRNSITVLFEDGKWSPPIVPGLHSRVEFTIPVNDLIHGSCTENPHLLVRHSIYVSIHSREPSSLSRKLAPPFLRTHKAKSNSLFSMKRPSSSSSSLSGSWHGDTENSVKQSLASPSEASLPNLSKYSRKNAKKLNEWLDSLDFKLPIYLFHRKLESELSHLPPYSPYRDSYFYLEDDDGDADTPSTASLDYFSNISPPDFLNKA.

Positions 370 to 385 (FSMKRPSSSSSSLSGS) are enriched in low complexity. The interval 370–406 (FSMKRPSSSSSSLSGSWHGDTENSVKQSLASPSEASL) is disordered. Residues 391–406 (ENSVKQSLASPSEASL) are compositionally biased toward polar residues.

It localises to the cytoplasm. The protein resides in the nucleus. This is an uncharacterized protein from Schizosaccharomyces pombe (strain 972 / ATCC 24843) (Fission yeast).